Reading from the N-terminus, the 325-residue chain is Succinylglutamate desuccinylase (325 aa).

His-51, Glu-54, and His-148 together coordinate Zn(2+). Glu-211 is a catalytic residue.

It belongs to the AspA/AstE family. Succinylglutamate desuccinylase subfamily. Requires Zn(2+) as cofactor.

The enzyme catalyses N-succinyl-L-glutamate + H2O = L-glutamate + succinate. Its pathway is amino-acid degradation; L-arginine degradation via AST pathway; L-glutamate and succinate from L-arginine: step 5/5. Functionally, transforms N(2)-succinylglutamate into succinate and glutamate. The polypeptide is Succinylglutamate desuccinylase (Photorhabdus laumondii subsp. laumondii (strain DSM 15139 / CIP 105565 / TT01) (Photorhabdus luminescens subsp. laumondii)).